Reading from the N-terminus, the 172-residue chain is 3-hydroxydecanoyl-[acyl-carrier-protein] dehydratase (172 aa).

Residue His71 is part of the active site.

It belongs to the thioester dehydratase family. FabA subfamily. In terms of assembly, homodimer.

It localises to the cytoplasm. It carries out the reaction a (3R)-hydroxyacyl-[ACP] = a (2E)-enoyl-[ACP] + H2O. The enzyme catalyses (3R)-hydroxydecanoyl-[ACP] = (2E)-decenoyl-[ACP] + H2O. The catalysed reaction is (2E)-decenoyl-[ACP] = (3Z)-decenoyl-[ACP]. The protein operates within lipid metabolism; fatty acid biosynthesis. In terms of biological role, necessary for the introduction of cis unsaturation into fatty acids. Catalyzes the dehydration of (3R)-3-hydroxydecanoyl-ACP to E-(2)-decenoyl-ACP and then its isomerization to Z-(3)-decenoyl-ACP. Can catalyze the dehydratase reaction for beta-hydroxyacyl-ACPs with saturated chain lengths up to 16:0, being most active on intermediate chain length. This is 3-hydroxydecanoyl-[acyl-carrier-protein] dehydratase from Enterobacter sp. (strain 638).